The primary structure comprises 354 residues: Ferrochelatase (354 aa).

Residues His191 and Glu271 each coordinate Fe cation.

It belongs to the ferrochelatase family.

The protein localises to the cytoplasm. It catalyses the reaction heme b + 2 H(+) = protoporphyrin IX + Fe(2+). It functions in the pathway porphyrin-containing compound metabolism; protoheme biosynthesis; protoheme from protoporphyrin-IX: step 1/1. Catalyzes the ferrous insertion into protoporphyrin IX. This Rickettsia bellii (strain OSU 85-389) protein is Ferrochelatase.